The chain runs to 238 residues: Ribonuclease PH (238 aa).

Phosphate contacts are provided by residues Arg-86 and 124-126 (GTR).

Belongs to the RNase PH family. As to quaternary structure, homohexameric ring arranged as a trimer of dimers.

It catalyses the reaction tRNA(n+1) + phosphate = tRNA(n) + a ribonucleoside 5'-diphosphate. In terms of biological role, phosphorolytic 3'-5' exoribonuclease that plays an important role in tRNA 3'-end maturation. Removes nucleotide residues following the 3'-CCA terminus of tRNAs; can also add nucleotides to the ends of RNA molecules by using nucleoside diphosphates as substrates, but this may not be physiologically important. Probably plays a role in initiation of 16S rRNA degradation (leading to ribosome degradation) during starvation. This chain is Ribonuclease PH, found in Pectobacterium atrosepticum (strain SCRI 1043 / ATCC BAA-672) (Erwinia carotovora subsp. atroseptica).